Consider the following 337-residue polypeptide: DNA-directed RNA polymerase subunit alpha (337 aa).

The interval 1–233 is alpha N-terminal domain (alpha-NTD); it reads MVREKVTVST…DLFIPFLHME (233 aa). Residues 265 to 337 form an alpha C-terminal domain (alpha-CTD) region; the sequence is KKIALKSIFI…FVIDLAKNKF (73 aa).

Belongs to the RNA polymerase alpha chain family. In terms of assembly, in plastids the minimal PEP RNA polymerase catalytic core is composed of four subunits: alpha, beta, beta', and beta''. When a (nuclear-encoded) sigma factor is associated with the core the holoenzyme is formed, which can initiate transcription.

It localises to the plastid. The protein resides in the chloroplast. The enzyme catalyses RNA(n) + a ribonucleoside 5'-triphosphate = RNA(n+1) + diphosphate. Functionally, DNA-dependent RNA polymerase catalyzes the transcription of DNA into RNA using the four ribonucleoside triphosphates as substrates. The sequence is that of DNA-directed RNA polymerase subunit alpha from Nicotiana sylvestris (Wood tobacco).